The chain runs to 510 residues: Maturase K (510 aa).

Belongs to the intron maturase 2 family. MatK subfamily.

The protein resides in the plastid. Its subcellular location is the chloroplast. Its function is as follows. Usually encoded in the trnK tRNA gene intron. Probably assists in splicing its own and other chloroplast group II introns. The polypeptide is Maturase K (Thuja plicata (Western red-cedar)).